The sequence spans 466 residues: Cysteine--tRNA ligase (466 aa).

Position 27 (C27) interacts with Zn(2+). Positions 29 to 39 (PTVYDDAHLGH) match the 'HIGH' region motif. The Zn(2+) site is built by C208, H238, and E242. A 'KMSKS' region motif is present at residues 270 to 274 (KMSKS). K273 contacts ATP.

It belongs to the class-I aminoacyl-tRNA synthetase family. In terms of assembly, monomer. Requires Zn(2+) as cofactor.

It localises to the cytoplasm. It catalyses the reaction tRNA(Cys) + L-cysteine + ATP = L-cysteinyl-tRNA(Cys) + AMP + diphosphate. The sequence is that of Cysteine--tRNA ligase from Sulfurimonas denitrificans (strain ATCC 33889 / DSM 1251) (Thiomicrospira denitrificans (strain ATCC 33889 / DSM 1251)).